Consider the following 336-residue polypeptide: UDP-N-acetylenolpyruvoylglucosamine reductase (336 aa).

In terms of domain architecture, FAD-binding PCMH-type spans 17 to 188; sequence LRSLAERFVE…WDVTFRLPKK (172 aa). The active site involves Arg164. Residue Ser237 is the Proton donor of the active site. The active site involves Glu332.

The protein belongs to the MurB family. FAD serves as cofactor.

The protein localises to the cytoplasm. The enzyme catalyses UDP-N-acetyl-alpha-D-muramate + NADP(+) = UDP-N-acetyl-3-O-(1-carboxyvinyl)-alpha-D-glucosamine + NADPH + H(+). It functions in the pathway cell wall biogenesis; peptidoglycan biosynthesis. Its function is as follows. Cell wall formation. The sequence is that of UDP-N-acetylenolpyruvoylglucosamine reductase from Bdellovibrio bacteriovorus (strain ATCC 15356 / DSM 50701 / NCIMB 9529 / HD100).